The sequence spans 430 residues: Dihydroorotase (430 aa).

Zn(2+) contacts are provided by H57 and H59. Residues 59–61 and N91 each bind substrate; that span reads HLR. Zn(2+) is bound by residues D151, H178, and H231. Position 277 (N277) interacts with substrate. A Zn(2+)-binding site is contributed by D304. D304 is an active-site residue. Substrate contacts are provided by residues H308 and 322–323; that span reads PG.

This sequence belongs to the metallo-dependent hydrolases superfamily. DHOase family. Class I DHOase subfamily. Requires Zn(2+) as cofactor.

It catalyses the reaction (S)-dihydroorotate + H2O = N-carbamoyl-L-aspartate + H(+). Its pathway is pyrimidine metabolism; UMP biosynthesis via de novo pathway; (S)-dihydroorotate from bicarbonate: step 3/3. In terms of biological role, catalyzes the reversible cyclization of carbamoyl aspartate to dihydroorotate. The sequence is that of Dihydroorotase from Mycobacterium bovis (strain ATCC BAA-935 / AF2122/97).